The following is a 263-amino-acid chain: Fructose-bisphosphate aldolase class 1 (263 aa).

The active-site Schiff-base intermediate with dihydroxyacetone-P is K177.

The protein belongs to the DeoC/FbaB aldolase family.

It catalyses the reaction beta-D-fructose 1,6-bisphosphate = D-glyceraldehyde 3-phosphate + dihydroxyacetone phosphate. Has aldolase activity with fructose 1,6-bisphosphate. May play a role in the biosynthesis of aromatic amino acids (AroAA). The protein is Fructose-bisphosphate aldolase class 1 (fba1) of Halobacterium salinarum (strain ATCC 29341 / DSM 671 / R1).